We begin with the raw amino-acid sequence, 138 residues long: Nucleoside diphosphate kinase (138 aa).

The ATP site is built by K10, F58, R86, T92, R103, and N113. Catalysis depends on H116, which acts as the Pros-phosphohistidine intermediate.

Belongs to the NDK family. Homotetramer. Mg(2+) serves as cofactor.

The protein localises to the cytoplasm. It catalyses the reaction a 2'-deoxyribonucleoside 5'-diphosphate + ATP = a 2'-deoxyribonucleoside 5'-triphosphate + ADP. The catalysed reaction is a ribonucleoside 5'-diphosphate + ATP = a ribonucleoside 5'-triphosphate + ADP. Major role in the synthesis of nucleoside triphosphates other than ATP. The ATP gamma phosphate is transferred to the NDP beta phosphate via a ping-pong mechanism, using a phosphorylated active-site intermediate. The chain is Nucleoside diphosphate kinase from Actinobacillus pleuropneumoniae serotype 5b (strain L20).